The sequence spans 367 residues: Alanine racemase (367 aa).

Residue Lys40 is the Proton acceptor; specific for D-alanine of the active site. An N6-(pyridoxal phosphate)lysine modification is found at Lys40. Arg136 provides a ligand contact to substrate. Tyr263 serves as the catalytic Proton acceptor; specific for L-alanine. Met310 serves as a coordination point for substrate.

This sequence belongs to the alanine racemase family. Requires pyridoxal 5'-phosphate as cofactor.

The enzyme catalyses L-alanine = D-alanine. Its pathway is amino-acid biosynthesis; D-alanine biosynthesis; D-alanine from L-alanine: step 1/1. Catalyzes the interconversion of L-alanine and D-alanine. May also act on other amino acids. This is Alanine racemase (alr) from Streptococcus pneumoniae (strain ATCC 700669 / Spain 23F-1).